Here is a 126-residue protein sequence, read N- to C-terminus: Aspartate 1-decarboxylase (126 aa).

The Schiff-base intermediate with substrate; via pyruvic acid role is filled by Ser-25. Ser-25 bears the Pyruvic acid (Ser) mark. Thr-57 contributes to the substrate binding site. Tyr-58 (proton donor) is an active-site residue. Substrate is bound at residue 73-75; that stretch reads GAA.

The protein belongs to the PanD family. As to quaternary structure, heterooctamer of four alpha and four beta subunits. Pyruvate is required as a cofactor. Is synthesized initially as an inactive proenzyme, which is activated by self-cleavage at a specific serine bond to produce a beta-subunit with a hydroxyl group at its C-terminus and an alpha-subunit with a pyruvoyl group at its N-terminus.

The protein localises to the cytoplasm. The catalysed reaction is L-aspartate + H(+) = beta-alanine + CO2. It functions in the pathway cofactor biosynthesis; (R)-pantothenate biosynthesis; beta-alanine from L-aspartate: step 1/1. Its function is as follows. Catalyzes the pyruvoyl-dependent decarboxylation of aspartate to produce beta-alanine. The chain is Aspartate 1-decarboxylase from Pseudomonas aeruginosa (strain LESB58).